We begin with the raw amino-acid sequence, 514 residues long: 2,3-bisphosphoglycerate-independent phosphoglycerate mutase (514 aa).

2 residues coordinate Mn(2+): Asp-14 and Ser-64. Ser-64 serves as the catalytic Phosphoserine intermediate. Residues His-125, 155–156 (RD), Arg-187, Arg-193, 263–266 (RADR), and Lys-336 contribute to the substrate site. The Mn(2+) site is built by Asp-403, His-407, Asp-444, His-445, and His-463.

Belongs to the BPG-independent phosphoglycerate mutase family. As to quaternary structure, monomer. It depends on Mn(2+) as a cofactor.

It carries out the reaction (2R)-2-phosphoglycerate = (2R)-3-phosphoglycerate. The protein operates within carbohydrate degradation; glycolysis; pyruvate from D-glyceraldehyde 3-phosphate: step 3/5. In terms of biological role, catalyzes the interconversion of 2-phosphoglycerate and 3-phosphoglycerate. The sequence is that of 2,3-bisphosphoglycerate-independent phosphoglycerate mutase from Shewanella denitrificans (strain OS217 / ATCC BAA-1090 / DSM 15013).